Here is a 420-residue protein sequence, read N- to C-terminus: UDP-N-acetylglucosamine 1-carboxyvinyltransferase (420 aa).

22-23 (KN) serves as a coordination point for phosphoenolpyruvate. UDP-N-acetyl-alpha-D-glucosamine is bound at residue R93. C117 (proton donor) is an active-site residue. C117 carries the 2-(S-cysteinyl)pyruvic acid O-phosphothioketal modification. UDP-N-acetyl-alpha-D-glucosamine contacts are provided by residues 162 to 165 (KVSV), D307, and I329.

This sequence belongs to the EPSP synthase family. MurA subfamily.

The protein resides in the cytoplasm. It carries out the reaction phosphoenolpyruvate + UDP-N-acetyl-alpha-D-glucosamine = UDP-N-acetyl-3-O-(1-carboxyvinyl)-alpha-D-glucosamine + phosphate. The protein operates within cell wall biogenesis; peptidoglycan biosynthesis. Functionally, cell wall formation. Adds enolpyruvyl to UDP-N-acetylglucosamine. The protein is UDP-N-acetylglucosamine 1-carboxyvinyltransferase of Actinobacillus succinogenes (strain ATCC 55618 / DSM 22257 / CCUG 43843 / 130Z).